We begin with the raw amino-acid sequence, 151 residues long: S-protein homolog 74 (151 aa).

The signal sequence occupies residues 1–25 (MNYIKQFILAICFYLVLTCQDHVLA).

It belongs to the plant self-incompatibility (S1) protein family.

The protein localises to the secreted. This Arabidopsis thaliana (Mouse-ear cress) protein is S-protein homolog 74.